Here is a 123-residue protein sequence, read N- to C-terminus: WAP four-disulfide core domain protein 5 (123 aa).

Residues 1–24 (MRFWSLFLLVVLLAVGGQLPAASG) form the signal peptide. 2 consecutive WAP domains span residues 27–74 (KGER…VPRI) and 75–121 (LVKR…RDPA). Intrachain disulfides connect cysteine 34/cysteine 62, cysteine 41/cysteine 66, cysteine 49/cysteine 61, cysteine 55/cysteine 70, cysteine 81/cysteine 109, cysteine 88/cysteine 113, cysteine 96/cysteine 108, and cysteine 102/cysteine 117.

It is found in the secreted. Putative acid-stable proteinase inhibitor. This Lemur catta (Ring-tailed lemur) protein is WAP four-disulfide core domain protein 5 (WFDC5).